A 1576-amino-acid chain; its full sequence is DExH-box ATP-dependent RNA helicase DExH2 (1576 aa).

The region spanning 15–78 (EATGAWATKV…ERRLSLFKGD (64 aa)) is the R3H domain. The region spanning 227–396 (ISAVESNQVV…FGGCPVVRVP (170 aa)) is the Helicase ATP-binding domain. 240–247 (GETGCGKT) is an ATP binding site. Residues 343–346 (DEIH) carry the DEIH box motif. A Helicase C-terminal domain is found at 561–735 (LIVKLMKKIC…ELCLQVKMLD (175 aa)). Disordered regions lie at residues 1137 to 1165 (ATSPRDDIPSTNPNELREHDPNTTPMGSK), 1177 to 1223 (MEES…SLNN), and 1260 to 1576 (DMGN…PSDQ). The segment covering 1281-1301 (PNSANSMDLGNMEENTPSDLA) has biased composition (polar residues). The segment covering 1305–1319 (KKKEPKSVSKLDLGS) has biased composition (basic and acidic residues). The PH1 motif lies at 1349–1360 (KQPEKKRSRSKK). The segment covering 1352-1363 (EKKRSRSKKRKS) has biased composition (basic residues). The segment covering 1381-1412 (ANENEQTEPKSANNLDLGNMKENTPSDLANEN) has biased composition (polar residues). The short motif at 1454–1465 (KQPKKKRSRSKK) is the PH2 element. The segment covering 1455-1467 (QPKKKRSRSKKCK) has biased composition (basic residues). Residues 1490 to 1508 (EQKDPESVNRLDPGKEKES) are compositionally biased toward basic and acidic residues. Over residues 1509 to 1524 (IPSNLVSGNEQPDSNT) the composition is skewed to polar residues. Basic residues predominate over residues 1528-1537 (KKPKKKKRKL). Residues 1530 to 1537 (PKKKKRKL) carry the Nuclear localization signal motif. Residues 1540-1562 (NFDSVNNMEEKMPSTNVLSQGNK) show a composition bias toward polar residues.

Belongs to the DExH box helicase family. Homodimer.

It is found in the nucleus. It catalyses the reaction ATP + H2O = ADP + phosphate + H(+). In terms of biological role, may function as an ATP-dependent RNA/DNA helicase. Binds DNA in vitro in a non-specific manner. The protein is DExH-box ATP-dependent RNA helicase DExH2 of Arabidopsis thaliana (Mouse-ear cress).